A 715-amino-acid chain; its full sequence is Glycine--tRNA ligase beta subunit (715 aa).

It belongs to the class-II aminoacyl-tRNA synthetase family. As to quaternary structure, tetramer of two alpha and two beta subunits.

It is found in the cytoplasm. The catalysed reaction is tRNA(Gly) + glycine + ATP = glycyl-tRNA(Gly) + AMP + diphosphate. This is Glycine--tRNA ligase beta subunit from Nitrosomonas eutropha (strain DSM 101675 / C91 / Nm57).